The sequence spans 235 residues: ATP-dependent dethiobiotin synthetase BioD (235 aa).

Residue 12 to 17 participates in ATP binding; sequence GVGKTF. Residue Thr-16 coordinates Mg(2+). Lys-37 is a catalytic residue. A substrate-binding site is contributed by Ser-41. ATP is bound by residues Asp-51, 112-115, and 202-204; these read EGAG and PKL. Residues Asp-51 and Glu-112 each coordinate Mg(2+).

Belongs to the dethiobiotin synthetase family. Homodimer. It depends on Mg(2+) as a cofactor.

It is found in the cytoplasm. The catalysed reaction is (7R,8S)-7,8-diammoniononanoate + CO2 + ATP = (4R,5S)-dethiobiotin + ADP + phosphate + 3 H(+). The protein operates within cofactor biosynthesis; biotin biosynthesis; biotin from 7,8-diaminononanoate: step 1/2. Catalyzes a mechanistically unusual reaction, the ATP-dependent insertion of CO2 between the N7 and N8 nitrogen atoms of 7,8-diaminopelargonic acid (DAPA, also called 7,8-diammoniononanoate) to form a ureido ring. The polypeptide is ATP-dependent dethiobiotin synthetase BioD (Bacillus licheniformis (strain ATCC 14580 / DSM 13 / JCM 2505 / CCUG 7422 / NBRC 12200 / NCIMB 9375 / NCTC 10341 / NRRL NRS-1264 / Gibson 46)).